We begin with the raw amino-acid sequence, 275 residues long: 4-diphosphocytidyl-2-C-methyl-D-erythritol kinase (275 aa).

The active site involves K14. An ATP-binding site is contributed by 98-108; it reads PMGAGLGGGSS. D140 is an active-site residue.

Belongs to the GHMP kinase family. IspE subfamily.

The catalysed reaction is 4-CDP-2-C-methyl-D-erythritol + ATP = 4-CDP-2-C-methyl-D-erythritol 2-phosphate + ADP + H(+). Its pathway is isoprenoid biosynthesis; isopentenyl diphosphate biosynthesis via DXP pathway; isopentenyl diphosphate from 1-deoxy-D-xylulose 5-phosphate: step 3/6. Its function is as follows. Catalyzes the phosphorylation of the position 2 hydroxy group of 4-diphosphocytidyl-2C-methyl-D-erythritol. This chain is 4-diphosphocytidyl-2-C-methyl-D-erythritol kinase, found in Francisella tularensis subsp. holarctica (strain FTNF002-00 / FTA).